The chain runs to 493 residues: Cytoplasmic tRNA 2-thiolation protein 2 (493 aa).

The residue at position 489 (serine 489) is a Phosphoserine.

This sequence belongs to the CTU2/NCS2 family. In terms of assembly, interacts with NCS6 and URM1. May act by forming a heterodimer with NCS6.

It localises to the cytoplasm. It functions in the pathway tRNA modification; 5-methoxycarbonylmethyl-2-thiouridine-tRNA biosynthesis. Plays a central role in 2-thiolation of mcm(5)S(2)U at tRNA wobble positions of tRNA(Lys), tRNA(Glu) and tRNA(Gln). May act by forming a heterodimer with NCS6 that ligates sulfur from thiocarboxylated URM1 onto the uridine of tRNAs at wobble position. Prior mcm(5) tRNA modification by the elongator complex is required for 2-thiolation. May also be involved in protein urmylation. This chain is Cytoplasmic tRNA 2-thiolation protein 2, found in Saccharomyces cerevisiae (strain RM11-1a) (Baker's yeast).